Here is a 512-residue protein sequence, read N- to C-terminus: 2-isopropylmalate synthase (512 aa).

A Pyruvate carboxyltransferase domain is found at 5 to 268 (LIIFDTTLRD…DLGIATQHIL (264 aa)). Mn(2+) is bound by residues Asp-14, His-202, His-204, and Asn-239. The tract at residues 394-512 (GFVSLFQQSE…NKADRVAAQG (119 aa)) is regulatory domain.

Belongs to the alpha-IPM synthase/homocitrate synthase family. LeuA type 1 subfamily. In terms of assembly, homodimer. The cofactor is Mn(2+).

The protein resides in the cytoplasm. The enzyme catalyses 3-methyl-2-oxobutanoate + acetyl-CoA + H2O = (2S)-2-isopropylmalate + CoA + H(+). It functions in the pathway amino-acid biosynthesis; L-leucine biosynthesis; L-leucine from 3-methyl-2-oxobutanoate: step 1/4. Catalyzes the condensation of the acetyl group of acetyl-CoA with 3-methyl-2-oxobutanoate (2-ketoisovalerate) to form 3-carboxy-3-hydroxy-4-methylpentanoate (2-isopropylmalate). The polypeptide is 2-isopropylmalate synthase (Verminephrobacter eiseniae (strain EF01-2)).